The sequence spans 251 residues: Cell division protein ZapD (251 aa).

This sequence belongs to the ZapD family. In terms of assembly, interacts with FtsZ.

The protein localises to the cytoplasm. Functionally, cell division factor that enhances FtsZ-ring assembly. Directly interacts with FtsZ and promotes bundling of FtsZ protofilaments, with a reduction in FtsZ GTPase activity. In Burkholderia cenocepacia (strain ATCC BAA-245 / DSM 16553 / LMG 16656 / NCTC 13227 / J2315 / CF5610) (Burkholderia cepacia (strain J2315)), this protein is Cell division protein ZapD.